The sequence spans 356 residues: TPR repeat-containing protein P27G11.02 (356 aa).

The N-terminal 20 residues, 1-20 (MRMQWIWKSRRSLQNVFIRR), are a transit peptide targeting the mitochondrion. TPR repeat units follow at residues 194 to 227 (SRLF…TMAN) and 290 to 323 (AAAF…RKDD).

The protein resides in the mitochondrion. The protein is TPR repeat-containing protein P27G11.02 of Schizosaccharomyces pombe (strain 972 / ATCC 24843) (Fission yeast).